Reading from the N-terminus, the 1485-residue chain is Chromosome partition protein MukB (1485 aa).

Residue 34 to 41 (GGNGAGKS) participates in ATP binding. 6 coiled-coil regions span residues 337–480 (LNLV…QAYQ), 509–605 (QHLA…PVWL), 780–805 (RAAR…ATLS), 835–915 (EAEI…IQQH), 977–1116 (GMLT…AKAG), and 1210–1235 (EAIE…KLAI). The segment at 666 to 783 (PSGAEDARLI…EVPLFGRAAR (118 aa)) is flexible hinge.

The protein belongs to the SMC family. MukB subfamily. In terms of assembly, homodimerization via its hinge domain. Binds to DNA via its C-terminal region. Interacts, and probably forms a ternary complex, with MukE and MukF via its C-terminal region. The complex formation is stimulated by calcium or magnesium. Interacts with tubulin-related protein FtsZ.

Its subcellular location is the cytoplasm. The protein localises to the nucleoid. In terms of biological role, plays a central role in chromosome condensation, segregation and cell cycle progression. Functions as a homodimer, which is essential for chromosome partition. Involved in negative DNA supercoiling in vivo, and by this means organize and compact chromosomes. May achieve or facilitate chromosome segregation by condensation DNA from both sides of a centrally located replisome during cell division. This chain is Chromosome partition protein MukB, found in Yersinia pestis bv. Antiqua (strain Antiqua).